The chain runs to 142 residues: Large ribosomal subunit protein uL13 (142 aa).

It belongs to the universal ribosomal protein uL13 family. In terms of assembly, part of the 50S ribosomal subunit.

This protein is one of the early assembly proteins of the 50S ribosomal subunit, although it is not seen to bind rRNA by itself. It is important during the early stages of 50S assembly. The polypeptide is Large ribosomal subunit protein uL13 (Glaesserella parasuis serovar 5 (strain SH0165) (Haemophilus parasuis)).